Consider the following 159-residue polypeptide: Ribosomal RNA large subunit methyltransferase H (159 aa).

S-adenosyl-L-methionine-binding positions include Leu76, Gly108, and 127–132 (FSKMTL).

It belongs to the RNA methyltransferase RlmH family. Homodimer.

It is found in the cytoplasm. It carries out the reaction pseudouridine(1915) in 23S rRNA + S-adenosyl-L-methionine = N(3)-methylpseudouridine(1915) in 23S rRNA + S-adenosyl-L-homocysteine + H(+). Specifically methylates the pseudouridine at position 1915 (m3Psi1915) in 23S rRNA. In Bacillus thuringiensis subsp. konkukian (strain 97-27), this protein is Ribosomal RNA large subunit methyltransferase H.